The chain runs to 292 residues: Inositol oxygenase (292 aa).

Substrate is bound by residues Arg33 and Asp88–Ser90. Positions 101, 128, and 129 each coordinate Fe cation. Residues Lys132 and Gly149–Asp150 contribute to the substrate site. His201, His227, and Asp260 together coordinate Fe cation. His227 to Ser228 provides a ligand contact to substrate.

This sequence belongs to the myo-inositol oxygenase family. It depends on Fe cation as a cofactor.

The protein resides in the cytoplasm. The catalysed reaction is myo-inositol + O2 = D-glucuronate + H2O + H(+). It functions in the pathway polyol metabolism; myo-inositol degradation into D-glucuronate; D-glucuronate from myo-inositol: step 1/1. In Dictyostelium discoideum (Social amoeba), this protein is Inositol oxygenase (miox).